The sequence spans 478 residues: Lactate utilization protein B (478 aa).

2 4Fe-4S ferredoxin-type domains span residues 303-333 (GTEFQSALHCIRCAACINVCPVYRHVGGHAY) and 352-381 (YDDHKELPYASSLCAACTEACPVKIPLHEQ). [4Fe-4S] cluster contacts are provided by Cys312, Cys315, Cys318, Cys322, Cys365, Cys368, and Cys372.

The protein belongs to the LutB/YkgF family.

Its function is as follows. Is involved in L-lactate degradation and allows cells to grow with lactate as the sole carbon source. Has probably a role as an electron transporter during oxidation of L-lactate. The sequence is that of Lactate utilization protein B from Oceanobacillus iheyensis (strain DSM 14371 / CIP 107618 / JCM 11309 / KCTC 3954 / HTE831).